The sequence spans 436 residues: Serine protease inhibitor A6 (436 aa).

A signal peptide spans Met-1 to Ala-16. Residues Lys-26 to Lys-60 form a disordered region. A compositionally biased stretch (basic and acidic residues) spans Glu-32–Lys-60. N-linked (GlcNAc...) asparagine glycans are attached at residues Asn-260 and Asn-289.

This sequence belongs to the serpin family. Liver.

The protein resides in the secreted. It is found in the extracellular space. Its function is as follows. Not yet known. The protein is Serine protease inhibitor A6 (serpina6) of Xenopus laevis (African clawed frog).